The primary structure comprises 228 residues: ATP synthase subunit beta, mitochondrial (228 aa).

The transit peptide at 1 to 31 (MFALRAAAKADKNLLPFLGQLSRSHAAKAAK) directs the protein to the mitochondrion. 183-190 (GGAGVGKT) is an ATP binding site.

Belongs to the ATPase alpha/beta chains family. As to quaternary structure, F-type ATPases have 2 components, CF(1) - the catalytic core - and CF(0) - the membrane proton channel. CF(1) has five subunits: alpha(3), beta(3), gamma(1), delta(1), epsilon(1). CF(0) has three main subunits: a, b and c.

It localises to the mitochondrion. The protein resides in the mitochondrion inner membrane. The catalysed reaction is ATP + H2O + 4 H(+)(in) = ADP + phosphate + 5 H(+)(out). In terms of biological role, mitochondrial membrane ATP synthase (F(1)F(0) ATP synthase or Complex V) produces ATP from ADP in the presence of a proton gradient across the membrane which is generated by electron transport complexes of the respiratory chain. F-type ATPases consist of two structural domains, F(1) - containing the extramembraneous catalytic core, and F(0) - containing the membrane proton channel, linked together by a central stalk and a peripheral stalk. During catalysis, ATP synthesis in the catalytic domain of F(1) is coupled via a rotary mechanism of the central stalk subunits to proton translocation. Subunits alpha and beta form the catalytic core in F(1). Rotation of the central stalk against the surrounding alpha(3)beta(3) subunits leads to hydrolysis of ATP in three separate catalytic sites on the beta subunits. The protein is ATP synthase subunit beta, mitochondrial of Drosophila virilis (Fruit fly).